A 201-amino-acid polypeptide reads, in one-letter code: Proteinase inhibitor type-2 CEVI57 (201 aa).

A signal peptide spans 1-23; sequence MAVYKVSFLAHLLVLGMYLLVST. 3 repeat units span residues 27–83, 84–143, and 144–199. Cystine bridges form between C30/C118, C34/C114, C42/C124, C54/C91, C57/C75, C58/C87, C64/C100, and C117/C135.

Belongs to the protease inhibitor I20 (potato type II proteinase inhibitor) family.

The protein is Proteinase inhibitor type-2 CEVI57 (CEVI57) of Solanum lycopersicum (Tomato).